Consider the following 306-residue polypeptide: Putative S-adenosyl-L-methionine-dependent methyltransferase MAV_4442 (306 aa).

S-adenosyl-L-methionine-binding positions include Asp-129 and 158–159 (DL).

This sequence belongs to the UPF0677 family.

Functionally, exhibits S-adenosyl-L-methionine-dependent methyltransferase activity. The sequence is that of Putative S-adenosyl-L-methionine-dependent methyltransferase MAV_4442 from Mycobacterium avium (strain 104).